The sequence spans 118 residues: Small ribosomal subunit protein uS13 (118 aa).

A disordered region spans residues 93 to 118 (RGLPVRGQRTKTNARTRKGPRKPIRK).

This sequence belongs to the universal ribosomal protein uS13 family. As to quaternary structure, part of the 30S ribosomal subunit. Forms a loose heterodimer with protein S19. Forms two bridges to the 50S subunit in the 70S ribosome.

Its function is as follows. Located at the top of the head of the 30S subunit, it contacts several helices of the 16S rRNA. In the 70S ribosome it contacts the 23S rRNA (bridge B1a) and protein L5 of the 50S subunit (bridge B1b), connecting the 2 subunits; these bridges are implicated in subunit movement. Contacts the tRNAs in the A and P-sites. This is Small ribosomal subunit protein uS13 from Pseudomonas fluorescens (strain Pf0-1).